Consider the following 418-residue polypeptide: Tryptophan synthase beta chain (418 aa).

Residues 1-18 (MTSTLPNASTPDPASLQP) show a composition bias toward polar residues. Residues 1–23 (MTSTLPNASTPDPASLQPSVRPG) form a disordered region. At lysine 111 the chain carries N6-(pyridoxal phosphate)lysine.

The protein belongs to the TrpB family. Tetramer of two alpha and two beta chains. Requires pyridoxal 5'-phosphate as cofactor.

The catalysed reaction is (1S,2R)-1-C-(indol-3-yl)glycerol 3-phosphate + L-serine = D-glyceraldehyde 3-phosphate + L-tryptophan + H2O. The protein operates within amino-acid biosynthesis; L-tryptophan biosynthesis; L-tryptophan from chorismate: step 5/5. In terms of biological role, the beta subunit is responsible for the synthesis of L-tryptophan from indole and L-serine. In Parasynechococcus marenigrum (strain WH8102), this protein is Tryptophan synthase beta chain.